The chain runs to 337 residues: Anthranilate phosphoribosyltransferase (337 aa).

5-phospho-alpha-D-ribose 1-diphosphate-binding positions include Gly-81, 84 to 85 (GD), Thr-89, 91 to 94 (NIST), 109 to 117 (KHGNRALSS), and Thr-121. Position 81 (Gly-81) interacts with anthranilate. Ser-93 provides a ligand contact to Mg(2+). Asn-112 is an anthranilate binding site. Residue Arg-167 participates in anthranilate binding. Positions 225 and 226 each coordinate Mg(2+).

The protein belongs to the anthranilate phosphoribosyltransferase family. As to quaternary structure, homodimer. Requires Mg(2+) as cofactor.

It catalyses the reaction N-(5-phospho-beta-D-ribosyl)anthranilate + diphosphate = 5-phospho-alpha-D-ribose 1-diphosphate + anthranilate. It functions in the pathway amino-acid biosynthesis; L-tryptophan biosynthesis; L-tryptophan from chorismate: step 2/5. Functionally, catalyzes the transfer of the phosphoribosyl group of 5-phosphorylribose-1-pyrophosphate (PRPP) to anthranilate to yield N-(5'-phosphoribosyl)-anthranilate (PRA). This chain is Anthranilate phosphoribosyltransferase, found in Rhizobium meliloti (strain 1021) (Ensifer meliloti).